Reading from the N-terminus, the 517-residue chain is GMP synthase [glutamine-hydrolyzing] (517 aa).

The region spanning 11-202 (KIIVLDFGSQ…AFDVCGAKDN (192 aa)) is the Glutamine amidotransferase type-1 domain. The active-site Nucleophile is the cysteine 88. Active-site residues include histidine 176 and glutamate 178. Positions 203 to 392 (WTMDDFIKLS…LGLPHDLVWR (190 aa)) constitute a GMPS ATP-PPase domain. 230–236 (SGGVDSS) provides a ligand contact to ATP.

Homodimer.

The enzyme catalyses XMP + L-glutamine + ATP + H2O = GMP + L-glutamate + AMP + diphosphate + 2 H(+). It participates in purine metabolism; GMP biosynthesis; GMP from XMP (L-Gln route): step 1/1. Catalyzes the synthesis of GMP from XMP. In Lactobacillus delbrueckii subsp. bulgaricus (strain ATCC 11842 / DSM 20081 / BCRC 10696 / JCM 1002 / NBRC 13953 / NCIMB 11778 / NCTC 12712 / WDCM 00102 / Lb 14), this protein is GMP synthase [glutamine-hydrolyzing].